The following is a 106-amino-acid chain: Urease subunit beta (106 aa).

The protein belongs to the urease beta subunit family. In terms of assembly, heterotrimer of UreA (gamma), UreB (beta) and UreC (alpha) subunits. Three heterotrimers associate to form the active enzyme.

It is found in the cytoplasm. The enzyme catalyses urea + 2 H2O + H(+) = hydrogencarbonate + 2 NH4(+). It participates in nitrogen metabolism; urea degradation; CO(2) and NH(3) from urea (urease route): step 1/1. The protein is Urease subunit beta of Synechococcus sp. (strain CC9902).